The following is a 1348-amino-acid chain: Phosphoribosylformylglycinamidine synthase (1348 aa).

Residues 300–311 (GAATGAGGEIRD) and Ala701 each bind ATP. Mg(2+) is bound by residues Asp702, Glu741, Asn745, and Asp941. Residue Ser943 participates in ATP binding. The 250-residue stretch at 1099–1348 (VAILREQGVN…MFRNARVWCG (250 aa)) folds into the Glutamine amidotransferase type-1 domain. The active-site Nucleophile is the Cys1192. Active-site residues include His1313 and Glu1315.

This sequence in the N-terminal section; belongs to the FGAMS family. In terms of assembly, monomer.

It is found in the cytoplasm. The catalysed reaction is N(2)-formyl-N(1)-(5-phospho-beta-D-ribosyl)glycinamide + L-glutamine + ATP + H2O = 2-formamido-N(1)-(5-O-phospho-beta-D-ribosyl)acetamidine + L-glutamate + ADP + phosphate + H(+). It participates in purine metabolism; IMP biosynthesis via de novo pathway; 5-amino-1-(5-phospho-D-ribosyl)imidazole from N(2)-formyl-N(1)-(5-phospho-D-ribosyl)glycinamide: step 1/2. Functionally, phosphoribosylformylglycinamidine synthase involved in the purines biosynthetic pathway. Catalyzes the ATP-dependent conversion of formylglycinamide ribonucleotide (FGAR) and glutamine to yield formylglycinamidine ribonucleotide (FGAM) and glutamate. The sequence is that of Phosphoribosylformylglycinamidine synthase from Xanthomonas campestris pv. campestris (strain ATCC 33913 / DSM 3586 / NCPPB 528 / LMG 568 / P 25).